The chain runs to 169 residues: Cuticle protein 21 (169 aa).

6 consecutive repeat copies span residues 21–24 (AAPV), 27–30 (AAPA), 33–36 (AAPV), 39–42 (AAPA), 47–50 (AAPV), and 53–56 (AAPA). A Chitin-binding type R&amp;R domain is found at 65–135 (NPQYSYAYNV…KEAGAHPAPV (71 aa)). 3 repeat units span residues 140–143 (AAPV), 146–149 (AAPA), and 160–163 (AAPA).

In terms of biological role, component of the cuticle of migratory locust which contains more than 100 different structural proteins. The chain is Cuticle protein 21 (ACP21) from Locusta migratoria (Migratory locust).